The chain runs to 301 residues: N-acetylmuramic acid 6-phosphate etherase (301 aa).

In terms of domain architecture, SIS spans 59–222 (TSEALMHGGR…STSVMVKLGK (164 aa)). Glu87 (proton donor) is an active-site residue. Glu118 is a catalytic residue.

This sequence belongs to the GCKR-like family. MurNAc-6-P etherase subfamily. As to quaternary structure, homodimer.

The catalysed reaction is N-acetyl-D-muramate 6-phosphate + H2O = N-acetyl-D-glucosamine 6-phosphate + (R)-lactate. It participates in amino-sugar metabolism; N-acetylmuramate degradation. Functionally, specifically catalyzes the cleavage of the D-lactyl ether substituent of MurNAc 6-phosphate, producing GlcNAc 6-phosphate and D-lactate. This is N-acetylmuramic acid 6-phosphate etherase from Picosynechococcus sp. (strain ATCC 27264 / PCC 7002 / PR-6) (Agmenellum quadruplicatum).